We begin with the raw amino-acid sequence, 67 residues long: MVKSLLFAIGYLIFLLVTRVNVINADICSHLGYACADDNECCDKFCKGLTPTTYGICNKKPYTYRQY.

An N-terminal signal peptide occupies residues 1-25 (MVKSLLFAIGYLIFLLVTRVNVINA). 3 cysteine pairs are disulfide-bonded: C28-C42, C35-C46, and C41-C57.

As to expression, abundantly expressed by teratocytes, which are extra-embryonic cells released by parasitoid wasps into their hosts during larval eclosion.

It localises to the secreted. Functionally, this endoparasitoid wasp peptide has immununosuppressive, antimicrobial and insecticidal activities. Suppress cellular immunity which is detectable as a reduction of hemocyte encapsulation in the host. Shows moderate antifungal activity against C.albicans (MIC=4 ug/ml). In vivo, ingestion of this peptide (probably at excessive doses) increases larval mortality and reduces leaf consumption of D.saccharalis, a permissive host for C.flavipes. This chain is Teratocyte protein CftICK-II, found in Cotesia flavipes (Parasitic wasp).